Here is a 684-residue protein sequence, read N- to C-terminus: Chaperone protein HtpG (684 aa).

The segment at Met-1–Arg-329 is a; substrate-binding. A b region spans residues Ser-330 to Gln-548. Residues Leu-549–Leu-684 are c.

It belongs to the heat shock protein 90 family. Homodimer.

It localises to the cytoplasm. Its function is as follows. Molecular chaperone. Has ATPase activity. This Porphyromonas gingivalis (strain ATCC 33277 / DSM 20709 / CIP 103683 / JCM 12257 / NCTC 11834 / 2561) protein is Chaperone protein HtpG.